The sequence spans 209 residues: 7-carboxy-7-deazaguanine synthase (209 aa).

Substrate contacts are provided by residues 10 to 12 (IQG) and R25. One can recognise a Radical SAM core domain in the interval 16–205 (YAGLPMLFVR…PQIHKIIYGD (190 aa)). The [4Fe-4S] cluster site is built by C29, C33, and C36. T38 lines the Mg(2+) pocket. T68 is a substrate binding site. An S-adenosyl-L-methionine-binding site is contributed by G70.

The protein belongs to the radical SAM superfamily. 7-carboxy-7-deazaguanine synthase family. In terms of assembly, homodimer. [4Fe-4S] cluster is required as a cofactor. Requires S-adenosyl-L-methionine as cofactor. Mg(2+) serves as cofactor.

It catalyses the reaction 6-carboxy-5,6,7,8-tetrahydropterin + H(+) = 7-carboxy-7-deazaguanine + NH4(+). The protein operates within purine metabolism; 7-cyano-7-deazaguanine biosynthesis. Its function is as follows. Catalyzes the complex heterocyclic radical-mediated conversion of 6-carboxy-5,6,7,8-tetrahydropterin (CPH4) to 7-carboxy-7-deazaguanine (CDG), a step common to the biosynthetic pathways of all 7-deazapurine-containing compounds. The chain is 7-carboxy-7-deazaguanine synthase from Thermoplasma acidophilum (strain ATCC 25905 / DSM 1728 / JCM 9062 / NBRC 15155 / AMRC-C165).